We begin with the raw amino-acid sequence, 373 residues long: Tryptophan--tRNA ligase (373 aa).

The 'HIGH' region signature appears at 79 to 87; the sequence is PSGKFHFGH. Residues 257 to 261 carry the 'KMSKS' region motif; the sequence is KMSSS.

It belongs to the class-I aminoacyl-tRNA synthetase family.

The protein localises to the cytoplasm. It catalyses the reaction tRNA(Trp) + L-tryptophan + ATP = L-tryptophyl-tRNA(Trp) + AMP + diphosphate + H(+). The sequence is that of Tryptophan--tRNA ligase from Hyperthermus butylicus (strain DSM 5456 / JCM 9403 / PLM1-5).